Consider the following 156-residue polypeptide: Succinate dehydrogenase assembly factor 2-B, mitochondrial (156 aa).

Residues 1–24 constitute a mitochondrion transit peptide; sequence MLRQFIISTVGRRQPLLMILQSRL.

This sequence belongs to the SDHAF2 family. Interacts with the flavoprotein subunit within the SDH catalytic dimer.

It localises to the mitochondrion matrix. In terms of biological role, plays an essential role in the assembly of succinate dehydrogenase (SDH), an enzyme complex (also referred to as respiratory complex II) that is a component of both the tricarboxylic acid (TCA) cycle and the mitochondrial electron transport chain, and which couples the oxidation of succinate to fumarate with the reduction of ubiquinone (coenzyme Q) to ubiquinol. Required for flavinylation (covalent attachment of FAD) of the flavoprotein subunit of the SDH catalytic dimer. This is Succinate dehydrogenase assembly factor 2-B, mitochondrial from Drosophila yakuba (Fruit fly).